A 94-amino-acid polypeptide reads, in one-letter code: Protein SpdA (94 aa).

A helical membrane pass occupies residues 41 to 68 (GPILLALVAAGGSVGVVMTLCLLLQTAA).

It is found in the cell membrane. Functionally, involved in plasmid transfer. The chain is Protein SpdA (spdA) from Streptomyces lividans.